The following is a 351-amino-acid chain: MSDKKPSLSYKDAGVDIDAGNALVERIKGVTKRTHRPEVMGNIGGFGALCEIPAGYKQPVLVSGTDGVGTKLRLAIDLKRHRGVGIDLVAMCVNDLIVQGAEPLFFLDYYATGKLDVDVAADVVAGIGDGCEQSGCALIGGETAEMPGMYEGGDYDLAGFCTGVVEKSEIIDGTKVADGDALIALASSGPHSNGYSLIRKIIEVSGADLESHLQGKTLADHLLEPTRIYVKPVLELIKHVPVHALSHITGGGFWENIPRVLPKGSKAVIDGNSWDWPVIFDWLKENGNISMKEMYRTFNCGVGMVIAVPNEQADKAIQILTDAGEDAWKIGRIANAAEGEEQVDILADETH.

This sequence belongs to the AIR synthase family.

Its subcellular location is the cytoplasm. The catalysed reaction is 2-formamido-N(1)-(5-O-phospho-beta-D-ribosyl)acetamidine + ATP = 5-amino-1-(5-phospho-beta-D-ribosyl)imidazole + ADP + phosphate + H(+). It functions in the pathway purine metabolism; IMP biosynthesis via de novo pathway; 5-amino-1-(5-phospho-D-ribosyl)imidazole from N(2)-formyl-N(1)-(5-phospho-D-ribosyl)glycinamide: step 2/2. In Idiomarina loihiensis (strain ATCC BAA-735 / DSM 15497 / L2-TR), this protein is Phosphoribosylformylglycinamidine cyclo-ligase.